The sequence spans 1336 residues: Lysine-specific demethylase 2B (1336 aa).

Residues 1-25 are disordered; sequence MAGPQMGGSAEDHPPRKRHAAEKQK. The span at 15–25 shows a compositional bias: basic residues; the sequence is PRKRHAAEKQK. Ser-57 is subject to Phosphoserine. The region spanning 178–346 is the JmjC domain; sequence FSHTKLEHLV…MQLRIYEIED (169 aa). Thr-239 provides a ligand contact to substrate. Fe cation is bound by residues His-242 and Asp-244. Lys-259 is a substrate binding site. His-314 contacts Fe cation. A compositionally biased stretch (acidic residues) spans 410-430; sequence MEEEACDQQPQEEEEKDEEGE. The tract at residues 410 to 465 is disordered; that stretch reads MEEEACDQQPQEEEEKDEEGEGRDRAPKPPTDGSTSPTSTPSEDQEALGKKPKAPA. Residues 440–451 show a composition bias toward low complexity; that stretch reads TDGSTSPTSTPS. Phosphoserine is present on residues Ser-474 and Ser-477. Phosphothreonine is present on Thr-493. Phosphoserine is present on Ser-497. The CXXC-type zinc-finger motif lies at 606 to 652; that stretch reads ARRRRTRCRKCEACLRTECGECHFCKDMKKFGGPGRMKQSCIMRQCI. The Zn(2+) site is built by Cys-613, Cys-616, Cys-619, Cys-624, Cys-627, Cys-630, Cys-646, Cys-651, Cys-662, Cys-665, Cys-688, Cys-691, His-696, Cys-699, Cys-719, and Cys-722. Residues 659 to 725 form a PHD-type zinc finger; that stretch reads TAVCLVCGEA…CWECPKCNHA (67 aa). Disordered regions lie at residues 727-843 and 855-1034; these read KTGK…SLSP and QLKP…SPPK. The span at 749–799 shows a compositional bias: basic and acidic residues; that stretch reads KEQKMNRDNKEGQEPAKRRSECEEAPRRRSDEHSKKVPPDGLLRRKSDDVH. Residues 819–843 are compositionally biased toward low complexity; the sequence is SSLQTSPGSSSHLSPRPPLGSSLSP. Residues Lys-857 and Lys-890 each participate in a glycyl lysine isopeptide (Lys-Gly) (interchain with G-Cter in SUMO2) cross-link. The segment covering 902–911 has biased composition (basic and acidic residues); it reads PKTRESDHSR. The span at 932 to 941 shows a compositional bias: basic residues; that stretch reads KVKMRRKRRL. Residues 942 to 960 show a composition bias toward basic and acidic residues; the sequence is PNKELSRELSKELNHEIQR. The stretch at 943–971 forms a coiled coil; that stretch reads NKELSRELSKELNHEIQRTENSLANENQQ. Residue Ser-951 is modified to Phosphoserine. A compositionally biased stretch (polar residues) spans 961-971; it reads TENSLANENQQ. 4 positions are modified to phosphoserine: Ser-975, Ser-979, Ser-1018, and Ser-1031. The span at 1014 to 1024 shows a compositional bias: low complexity; sequence PSLRSPPRVIS. Residues 1059–1105 form the F-box domain; sequence DGAAHVMHREVWMAVFSYLSHQDLCVCMRVCRTWNRWCCDKRLWTRI. 7 LRR repeats span residues 1093–1120, 1133–1154, 1156–1182, 1222–1247, 1248–1277, 1278–1302, and 1303–1336; these read NRWC…MLSG, WTNI…LRDL, LSGC…DVQW, GLDI…HLSY, CNHV…NLSD, CNKV…DLRY, and CKQV…QKLS.

It belongs to the JHDM1 histone demethylase family. In terms of assembly, interacts with SKP1, forming heterodimers. The heterodimeric KDM2B-SKP1 complex interacts with the PCGF1-BCORL1 heterodimeric complex to form a homotetrameric polycomb repression complex 1 (PRC1.1). Directly interacts with CUL1. The SKP1-KDM2B complex interacts with UBB. Requires Fe(2+) as cofactor.

The protein localises to the nucleus. It localises to the nucleolus. It is found in the chromosome. It carries out the reaction N(6),N(6)-dimethyl-L-lysyl(36)-[histone H3] + 2 2-oxoglutarate + 2 O2 = L-lysyl(36)-[histone H3] + 2 formaldehyde + 2 succinate + 2 CO2. With respect to regulation, histone demethylase activity is inhibited by fumarate. Functionally, histone demethylase that demethylates 'Lys-4' and 'Lys-36' of histone H3, thereby playing a central role in histone code. Preferentially demethylates trimethylated H3 'Lys-4' and dimethylated H3 'Lys-36' residue while it has weak or no activity for mono- and tri-methylated H3 'Lys-36'. Preferentially binds the transcribed region of ribosomal RNA and represses the transcription of ribosomal RNA genes which inhibits cell growth and proliferation. May also serve as a substrate-recognition component of the SCF (SKP1-CUL1-F-box protein)-type E3 ubiquitin ligase complex. This chain is Lysine-specific demethylase 2B (KDM2B), found in Homo sapiens (Human).